The chain runs to 338 residues: Ketol-acid reductoisomerase (NADP(+)) (338 aa).

A KARI N-terminal Rossmann domain is found at 1 to 181; that stretch reads MQIFYDKDCD…GGGRTGIIET (181 aa). NADP(+)-binding positions include 24-27, R47, S50, S52, and 82-85; these read YGSQ and DEFQ. Residue H107 is part of the active site. G133 lines the NADP(+) pocket. The KARI C-terminal knotted domain occupies 182–327; that stretch reads SFREETETDL…AKLRAMMPWI (146 aa). Mg(2+)-binding residues include D190, E194, E226, and E230. Residue S251 participates in substrate binding.

Belongs to the ketol-acid reductoisomerase family. Mg(2+) is required as a cofactor.

It carries out the reaction (2R)-2,3-dihydroxy-3-methylbutanoate + NADP(+) = (2S)-2-acetolactate + NADPH + H(+). The enzyme catalyses (2R,3R)-2,3-dihydroxy-3-methylpentanoate + NADP(+) = (S)-2-ethyl-2-hydroxy-3-oxobutanoate + NADPH + H(+). The protein operates within amino-acid biosynthesis; L-isoleucine biosynthesis; L-isoleucine from 2-oxobutanoate: step 2/4. It functions in the pathway amino-acid biosynthesis; L-valine biosynthesis; L-valine from pyruvate: step 2/4. Its function is as follows. Involved in the biosynthesis of branched-chain amino acids (BCAA). Catalyzes an alkyl-migration followed by a ketol-acid reduction of (S)-2-acetolactate (S2AL) to yield (R)-2,3-dihydroxy-isovalerate. In the isomerase reaction, S2AL is rearranged via a Mg-dependent methyl migration to produce 3-hydroxy-3-methyl-2-ketobutyrate (HMKB). In the reductase reaction, this 2-ketoacid undergoes a metal-dependent reduction by NADPH to yield (R)-2,3-dihydroxy-isovalerate. The chain is Ketol-acid reductoisomerase (NADP(+)) from Acinetobacter baumannii (strain AB0057).